Reading from the N-terminus, the 189-residue chain is Ribonuclease HII (189 aa).

Residues 1-189 (MIAGVDEAGR…IAALLKNNKK (189 aa)) form the RNase H type-2 domain. A divalent metal cation-binding residues include aspartate 6, glutamate 7, and aspartate 98.

Belongs to the RNase HII family. Mn(2+) is required as a cofactor. Mg(2+) serves as cofactor.

It localises to the cytoplasm. It carries out the reaction Endonucleolytic cleavage to 5'-phosphomonoester.. In terms of biological role, endonuclease that specifically degrades the RNA of RNA-DNA hybrids. The chain is Ribonuclease HII from Dichelobacter nodosus (strain VCS1703A).